The primary structure comprises 101 residues: Small ribosomal subunit protein uS14 (101 aa).

This sequence belongs to the universal ribosomal protein uS14 family. In terms of assembly, part of the 30S ribosomal subunit. Contacts proteins S3 and S10.

Functionally, binds 16S rRNA, required for the assembly of 30S particles and may also be responsible for determining the conformation of the 16S rRNA at the A site. The polypeptide is Small ribosomal subunit protein uS14 (Burkholderia ambifaria (strain MC40-6)).